The primary structure comprises 39 residues: uncharacterized protein (39 aa).

Belongs to the orthopoxvirus A30.5 protein family.

This is an uncharacterized protein from Bos taurus (Bovine).